The primary structure comprises 300 residues: Solute carrier family 25 member 35 (300 aa).

3 Solcar repeats span residues M1–R90, H100–L193, and Q203–F294. Helical transmembrane passes span T38–G58, L59–I79, G91–L119, A169–I190, W205–P225, and L277–K300.

This sequence belongs to the mitochondrial carrier (TC 2.A.29) family.

Its subcellular location is the mitochondrion inner membrane. It catalyses the reaction a dicarboxylate(in) + sulfate(out) = a dicarboxylate(out) + sulfate(in). Its function is as follows. Putative antiporter that exchanges dicarboxylates and sulfur oxoanions across the inner membrane of mitochondria. This Mus musculus (Mouse) protein is Solute carrier family 25 member 35 (Slc25a35).